A 337-amino-acid chain; its full sequence is Hsp90 co-chaperone Cdc37-like 1 (337 aa).

The span at 1–11 shows a compositional bias: pro residues; it reads MEQPWPPPGPW. Residues 1-43 are disordered; that stretch reads MEQPWPPPGPWSLPRAEGEAEEESDLDLSPGSPRCPQLPGGGT. Residues 2–171 are self-association; sequence EQPWPPPGPW…HEQKIRHFGM (170 aa). Residues Ser32 and Ser88 each carry the phosphoserine modification. Residues 84 to 122 adopt a coiled-coil conformation; the sequence is HNSESLDQEHAKAQTAISELRQREEEWRQKEEALVQRER. The tract at residues 147–277 is self-association and interaction with Hsp90; that stretch reads KETEDEDKSK…SRVRLYSQSP (131 aa). An interaction with Hsp70 region spans residues 267–337; it reads KSRVRLYSQS…DDEPKMMDTV (71 aa). Residues 278–337 are required for interaction with STIP1; the sequence is NFQPVTVQNHVPHSGVGSIGLLESLPQNPDYLQYSINTALCSLNSVVHKEDDEPKMMDTV.

The protein belongs to the CDC37 family. Self-associates. Forms complexes with Hsp70 and Hsp90. Interacts with CDC37, FKBP4, PPID and STIP1.

It is found in the cytoplasm. Co-chaperone that binds to numerous proteins and promotes their interaction with Hsp70 and Hsp90. This chain is Hsp90 co-chaperone Cdc37-like 1 (CDC37L1), found in Bos taurus (Bovine).